We begin with the raw amino-acid sequence, 100 residues long: Small ribosomal subunit protein uS14c (100 aa).

The disordered stretch occupies residues 1–31; that stretch reads MARKSLIQREKKRQKLEQKYHSIRRSSKKEI.

This sequence belongs to the universal ribosomal protein uS14 family. In terms of assembly, part of the 30S ribosomal subunit.

The protein localises to the plastid. It localises to the chloroplast. Functionally, binds 16S rRNA, required for the assembly of 30S particles. The sequence is that of Small ribosomal subunit protein uS14c from Solanum bulbocastanum (Wild potato).